Here is a 66-residue protein sequence, read N- to C-terminus: Small ribosomal subunit protein bS21 (66 aa).

This sequence belongs to the bacterial ribosomal protein bS21 family.

This chain is Small ribosomal subunit protein bS21, found in Rickettsia africae (strain ESF-5).